We begin with the raw amino-acid sequence, 202 residues long: Dephospho-CoA kinase (202 aa).

The 198-residue stretch at 5–202 (VIGLTGGIGS…KKYLTLTKMV (198 aa)) folds into the DPCK domain. 13–18 (GSGKTT) contacts ATP.

This sequence belongs to the CoaE family.

Its subcellular location is the cytoplasm. It carries out the reaction 3'-dephospho-CoA + ATP = ADP + CoA + H(+). The protein operates within cofactor biosynthesis; coenzyme A biosynthesis; CoA from (R)-pantothenate: step 5/5. Catalyzes the phosphorylation of the 3'-hydroxyl group of dephosphocoenzyme A to form coenzyme A. The protein is Dephospho-CoA kinase of Colwellia psychrerythraea (strain 34H / ATCC BAA-681) (Vibrio psychroerythus).